Here is a 207-residue protein sequence, read N- to C-terminus: Small ribosomal subunit protein uS4c (207 aa).

The segment at 22–51 is disordered; sequence TQKNCTRDFPPGQHGPKKKGGGNQKTKESQ. One can recognise an S4 RNA-binding domain in the interval 97–158; it reads MRLDTIIFRL…NSQNFVKNLL (62 aa).

This sequence belongs to the universal ribosomal protein uS4 family. Part of the 30S ribosomal subunit. Contacts protein S5. The interaction surface between S4 and S5 is involved in control of translational fidelity.

The protein resides in the plastid. Its subcellular location is the chloroplast. Its function is as follows. One of the primary rRNA binding proteins, it binds directly to 16S rRNA where it nucleates assembly of the body of the 30S subunit. In terms of biological role, with S5 and S12 plays an important role in translational accuracy. The sequence is that of Small ribosomal subunit protein uS4c (rps4) from Chlorella vulgaris (Green alga).